The chain runs to 180 residues: Hypoxanthine-guanine phosphoribosyltransferase (180 aa).

Lys-43 and Gly-44 together coordinate diphosphate. Residues Glu-99 and Asp-100 each coordinate Mg(2+). Asp-103 serves as the catalytic Proton acceptor. GMP contacts are provided by residues Lys-131, 152-153, and Asp-159; that span reads FV. A diphosphate-binding site is contributed by Arg-165.

The protein belongs to the purine/pyrimidine phosphoribosyltransferase family. It depends on Mg(2+) as a cofactor.

It is found in the cytoplasm. It catalyses the reaction IMP + diphosphate = hypoxanthine + 5-phospho-alpha-D-ribose 1-diphosphate. The catalysed reaction is GMP + diphosphate = guanine + 5-phospho-alpha-D-ribose 1-diphosphate. The protein operates within purine metabolism; IMP biosynthesis via salvage pathway; IMP from hypoxanthine: step 1/1. It functions in the pathway purine metabolism; GMP biosynthesis via salvage pathway; GMP from guanine: step 1/1. In terms of biological role, purine salvage pathway enzyme that catalyzes the transfer of the ribosyl-5-phosphate group from 5-phospho-alpha-D-ribose 1-diphosphate (PRPP) to the N9 position of the 6-oxopurines hypoxanthine and guanine to form the corresponding ribonucleotides IMP (inosine 5'-monophosphate) and GMP (guanosine 5'-monophosphate), with the release of PPi. The chain is Hypoxanthine-guanine phosphoribosyltransferase (hpt) from Streptococcus pneumoniae serotype 4 (strain ATCC BAA-334 / TIGR4).